A 78-amino-acid chain; its full sequence is Small ribosomal subunit protein bS20 (78 aa).

This sequence belongs to the bacterial ribosomal protein bS20 family.

In terms of biological role, binds directly to 16S ribosomal RNA. In Streptococcus sanguinis (strain SK36), this protein is Small ribosomal subunit protein bS20.